Here is a 90-residue protein sequence, read N- to C-terminus: Sec-independent protein translocase protein TatA (90 aa).

The helical transmembrane segment at 1 to 21 (MGLPGGWELVLIVGVLVLLFG) threads the bilayer. Over residues 42–60 (EARGMKEDEEAAKREKQAK) the composition is skewed to basic and acidic residues. The tract at residues 42 to 90 (EARGMKEDEEAAKREKQAKSEPQQLTAGESSAPTVASPVEETQRNDSKK) is disordered. A compositionally biased stretch (polar residues) spans 61–75 (SEPQQLTAGESSAPT).

It belongs to the TatA/E family. In terms of assembly, the Tat system comprises two distinct complexes: a TatABC complex, containing multiple copies of TatA, TatB and TatC subunits, and a separate TatA complex, containing only TatA subunits. Substrates initially bind to the TatABC complex, which probably triggers association of the separate TatA complex to form the active translocon.

It localises to the cell membrane. In terms of biological role, part of the twin-arginine translocation (Tat) system that transports large folded proteins containing a characteristic twin-arginine motif in their signal peptide across membranes. TatA could form the protein-conducting channel of the Tat system. The sequence is that of Sec-independent protein translocase protein TatA from Saccharopolyspora erythraea (strain ATCC 11635 / DSM 40517 / JCM 4748 / NBRC 13426 / NCIMB 8594 / NRRL 2338).